Here is a 396-residue protein sequence, read N- to C-terminus: Methylthioribose kinase (396 aa).

ATP-binding positions include Asn44, Lys61, and 115–117; that span reads EDL. Substrate is bound at residue Asp233. Residue 250 to 252 coordinates ATP; sequence DPE. Arg340 contacts substrate.

Belongs to the methylthioribose kinase family. In terms of assembly, homodimer.

It carries out the reaction 5-(methylsulfanyl)-D-ribose + ATP = 5-(methylsulfanyl)-alpha-D-ribose 1-phosphate + ADP + H(+). Its pathway is amino-acid biosynthesis; L-methionine biosynthesis via salvage pathway; S-methyl-5-thio-alpha-D-ribose 1-phosphate from S-methyl-5'-thioadenosine (hydrolase route): step 2/2. In terms of biological role, catalyzes the phosphorylation of methylthioribose into methylthioribose-1-phosphate. In Geobacillus kaustophilus (strain HTA426), this protein is Methylthioribose kinase.